Consider the following 379-residue polypeptide: L-lactate dehydrogenase (379 aa).

One can recognise an FMN hydroxy acid dehydrogenase domain in the interval 1–379 (MIISSSTDYR…ISPDSLVRGL (379 aa)). A substrate-binding site is contributed by Y24. Residues S106 and Q127 each contribute to the FMN site. Y129 contributes to the substrate binding site. Residue T155 coordinates FMN. R164 contacts substrate. K251 serves as a coordination point for FMN. Catalysis depends on H275, which acts as the Proton acceptor. Residue R278 participates in substrate binding. 306–330 (DSGIRSGLDVVRMIAQGADGVLIGR) serves as a coordination point for FMN.

Belongs to the FMN-dependent alpha-hydroxy acid dehydrogenase family. It depends on FMN as a cofactor.

It is found in the cell inner membrane. It catalyses the reaction (S)-lactate + A = pyruvate + AH2. Functionally, catalyzes the conversion of L-lactate to pyruvate. Is coupled to the respiratory chain. The sequence is that of L-lactate dehydrogenase from Allorhizobium ampelinum (strain ATCC BAA-846 / DSM 112012 / S4) (Agrobacterium vitis (strain S4)).